The following is a 469-amino-acid chain: SWI/SNF complex subunit SWI3B (469 aa).

Residues 1–42 (MAMKAPDPGGSGEILPSTPSLSETTSGGAAAASKSAQLPSSS) are disordered. The span at 15-42 (LPSTPSLSETTSGGAAAASKSAQLPSSS) shows a compositional bias: low complexity. The SWIRM domain occupies 48–145 (IHVPSYSSWF…YNSSASAKPL (98 aa)). Residues 223 to 274 (ESKPEWSDKEILLLLEAVMHYGDDWKKVASHVIGRTEKDCVSQFVKLPFGEQ) form the SANT domain. Basic and acidic residues-rich tracts occupy residues 293 to 306 (DSDIPESEGIDKDG) and 360 to 369 (DKNASRDPNR). 2 disordered regions span residues 293–314 (DSDIPESEGIDKDGSSPNKRIK) and 360–387 (DKNASRDPNRQDANAASSGETTRNESER). Residues 370–380 (QDANAASSGET) show a composition bias toward polar residues. The stretch at 423–447 (VHFEKLDLEMERSRKQLEEVRNLLF) forms a coiled coil.

Homodimers and heterodimers. Interacts with SWI3A, SWI3C, SWI3D, BSH, BRM and FCA (via C-terminus), and (via N-terminus) with HAB1. Interacts with MORC6 and SUVH9. Expressed in roots, stems, leaves, flowers and siliques.

Its subcellular location is the nucleus. Functionally, component of a multiprotein complex equivalent of the SWI/SNF complex, an ATP-dependent chromatin-remodeling complex, which is required for the positive and negative regulation of gene expression of a large number of genes. It changes chromatin structure by altering DNA-histone contacts within a nucleosome, leading eventually to a change in nucleosome position, thus facilitating or repressing binding of gene-specific transcription factors. May play an essential role in the transition from the vegetative to the reproductive phase of development. May be a positive regulator of ABA signaling. The protein is SWI/SNF complex subunit SWI3B (SWI3B) of Arabidopsis thaliana (Mouse-ear cress).